The chain runs to 166 residues: Myosin regulatory light chain 2, ventricular/cardiac muscle isoform (166 aa).

Ser2 is modified (n,N,N-trimethylserine). Position 14 is a deamidated asparagine (Asn14). Phosphoserine is present on Ser19. 3 consecutive EF-hand domains span residues 24 to 59 (TQIQ…LGRV), 94 to 129 (DPEE…QAER), and 130 to 165 (FSKE…GEEK). The Ca(2+) site is built by Asp37, Asn39, Asp41, and Asp48. Residue Thr52 is modified to Phosphothreonine.

As to quaternary structure, myosin is a hexamer of 2 heavy chains and 4 light chains. Interacts with MYOC. Post-translationally, N-terminus is methylated by METTL11A/NTM1. Phosphorylated by MYLK3 and MYLK2; promotes cardiac muscle contraction and function. Dephosphorylated by PPP1CB complexed to PPP1R12B. The phosphorylated form in adult is expressed as gradients across the heart from endocardium (low phosphorylation) to epicardium (high phosphorylation); regulates cardiac torsion and workload distribution.

The protein resides in the cytoplasm. It localises to the myofibril. The protein localises to the sarcomere. It is found in the a band. Its function is as follows. Contractile protein that plays a role in heart development and function. Following phosphorylation, plays a role in cross-bridge cycling kinetics and cardiac muscle contraction by increasing myosin lever arm stiffness and promoting myosin head diffusion; as a consequence of the increase in maximum contraction force and calcium sensitivity of contraction force. These events altogether slow down myosin kinetics and prolong duty cycle resulting in accumulated myosins being cooperatively recruited to actin binding sites to sustain thin filament activation as a means to fine-tune myofilament calcium sensitivity to force. During cardiogenesis plays an early role in cardiac contractility by promoting cardiac myofibril assembly. The chain is Myosin regulatory light chain 2, ventricular/cardiac muscle isoform from Bos taurus (Bovine).